A 400-amino-acid polypeptide reads, in one-letter code: Methylthioribose kinase (400 aa).

ATP contacts are provided by residues asparagine 44, lysine 61, and glutamate 115 to leucine 117. Residue aspartate 233 participates in substrate binding. Residue aspartate 250–glutamate 252 participates in ATP binding. Arginine 340 contacts substrate.

This sequence belongs to the methylthioribose kinase family. In terms of assembly, homodimer.

The catalysed reaction is 5-(methylsulfanyl)-D-ribose + ATP = 5-(methylsulfanyl)-alpha-D-ribose 1-phosphate + ADP + H(+). It participates in amino-acid biosynthesis; L-methionine biosynthesis via salvage pathway; S-methyl-5-thio-alpha-D-ribose 1-phosphate from S-methyl-5'-thioadenosine (hydrolase route): step 2/2. Its function is as follows. Catalyzes the phosphorylation of methylthioribose into methylthioribose-1-phosphate. The protein is Methylthioribose kinase of Geobacillus sp. (strain WCH70).